A 511-amino-acid chain; its full sequence is 60 kDa neurofilament protein (511 aa).

Positions 1 to 32 (MSVTQKKTEISTTTTYEGESRPSSGMSGFSYS) are disordered. The tract at residues 1 to 99 (MSVTQKKTEI…KANREREKQD (99 aa)) is head. Positions 21 to 30 (RPSSGMSGFS) are enriched in polar residues. An IF rod domain is found at 96–449 (EKQDMRDLNE…KLLEGEESRV (354 aa)). The interval 100–135 (MRDLNERFANYIEKVRFLEAQNKKLAGELEELKSKW) is coil 1A. The linker 1 stretch occupies residues 136–145 (GKETSAIKEM). Residues 146-284 (YETELEEARK…VHAQELKELA (139 aa)) are coil 1B. The segment at 285 to 303 (ALAYRDTTAENREFWRNEL) is linker 12. The segment at 304 to 449 (AQAIRDIQQE…KLLEGEESRV (146 aa)) is coil 2. A tail region spans residues 450–511 (GMKQIVEQVV…EEKKSMGSSD (62 aa)). Residues 479–511 (GYEATGGITTTTTTSSQERRSMSEEKKSMGSSD) are disordered. A compositionally biased stretch (low complexity) spans 483 to 492 (TGGITTTTTT). The segment covering 495-511 (QERRSMSEEKKSMGSSD) has biased composition (basic and acidic residues).

This sequence belongs to the intermediate filament family.

Functionally, major squid neurofilament protein. The chain is 60 kDa neurofilament protein from Doryteuthis pealeii (Longfin inshore squid).